The chain runs to 303 residues: Probable 5-dehydro-4-deoxyglucarate dehydratase (303 aa).

This sequence belongs to the DapA family.

The enzyme catalyses 5-dehydro-4-deoxy-D-glucarate + H(+) = 2,5-dioxopentanoate + CO2 + H2O. Its pathway is carbohydrate acid metabolism; D-glucarate degradation; 2,5-dioxopentanoate from D-glucarate: step 2/2. The sequence is that of Probable 5-dehydro-4-deoxyglucarate dehydratase from Variovorax paradoxus (strain S110).